Reading from the N-terminus, the 539-residue chain is MYGGDEYANNSEYYDDYAHTGDPQLDMEYERNYYAARMPDNVKYFLINFCQAIKEGNLYDIQNMYENTFPQISDHHFDKTAWPEEQEVAAIVDNDKVFLILYKELYYRHIHARISGGPKLEQRINSFFNYCDFFNLIISAQNPVMLELPDIWLWELVDEFVYQFQNFAQYRARLTDKSQDEIQQLCVNHSNEWSILCILNVLHSLVDISNIKKQLEAISQGSDPQTVAGDFGKLSFYKMLGYFSLVGLLRVHSLLGDYYQAIKVLEPIEIHKKSAYSHIPACQISTSYYVGFAYMMMRRYADAIRTFSDILLYIQRTKQLYSTRSYQNDQINKQAEQMYHLLAICLVLHPQCIDESIQQVLREKNYHDAMFKMQCGDLEVFKSFFVFACPRFVSPCPPAADAPMEDYVKDPMEHQLLVFMDEVRQQKDLPTTRSYLKLYTTLPLTKLASFIDPNASEDDVSKLLIRLLCFKHKMRNLVWSKGPSGLEGTFKSGSELDFYIDDDMIHIADTKVSHRYGDFFVRKILKFNDLNRKLKNINI.

The 209-residue stretch at 306–514 (TFSDILLYIQ…IHIADTKVSH (209 aa)) folds into the PCI domain.

This sequence belongs to the eIF-3 subunit L family. In terms of assembly, component of the eukaryotic translation initiation factor 3 (eIF-3) complex. The eIF-3 complex interacts with pix.

The protein localises to the cytoplasm. Component of the eukaryotic translation initiation factor 3 (eIF-3) complex, which is involved in protein synthesis of a specialized repertoire of mRNAs and, together with other initiation factors, stimulates binding of mRNA and methionyl-tRNAi to the 40S ribosome. The eIF-3 complex specifically targets and initiates translation of a subset of mRNAs involved in cell proliferation. The polypeptide is Eukaryotic translation initiation factor 3 subunit L (Drosophila yakuba (Fruit fly)).